The chain runs to 395 residues: 8-amino-7-oxononanoate synthase/2-amino-3-ketobutyrate coenzyme A ligase (395 aa).

110–111 (GF) is a binding site for pyridoxal 5'-phosphate. His135 contributes to the substrate binding site. Residues Ser182, 207 to 210 (DDAH), and 239 to 242 (TLSK) each bind pyridoxal 5'-phosphate. Lys242 is modified (N6-(pyridoxal phosphate)lysine). Residue Thr356 coordinates substrate.

The protein belongs to the class-II pyridoxal-phosphate-dependent aminotransferase family. As to quaternary structure, homodimer. It depends on pyridoxal 5'-phosphate as a cofactor.

It carries out the reaction 6-carboxyhexanoyl-[ACP] + L-alanine + H(+) = (8S)-8-amino-7-oxononanoate + holo-[ACP] + CO2. It catalyses the reaction glycine + acetyl-CoA = (2S)-2-amino-3-oxobutanoate + CoA. It functions in the pathway cofactor biosynthesis; biotin biosynthesis. Catalyzes the decarboxylative condensation of pimeloyl-[acyl-carrier protein] and L-alanine to produce 8-amino-7-oxononanoate (AON), [acyl-carrier protein], and carbon dioxide. Can also use pimeloyl-CoA instead of pimeloyl-ACP as substrate. It also converts 2-amino-3-ketobutyrate and CoA to glycine and acetyl-CoA. Activity is also observed with the following combinations of substrates: acetyl-CoA and either L-alanine or L-serine, pimeloyl-CoA and either glycine or L-serine, and palmitoyl-CoA with L-alanine. This is 8-amino-7-oxononanoate synthase/2-amino-3-ketobutyrate coenzyme A ligase from Thermus thermophilus (strain ATCC 27634 / DSM 579 / HB8).